Here is an 87-residue protein sequence, read N- to C-terminus: Small ribosomal subunit protein uS19 (87 aa).

The protein belongs to the universal ribosomal protein uS19 family.

In terms of biological role, protein S19 forms a complex with S13 that binds strongly to the 16S ribosomal RNA. This is Small ribosomal subunit protein uS19 from Mesoplasma florum (strain ATCC 33453 / NBRC 100688 / NCTC 11704 / L1) (Acholeplasma florum).